A 950-amino-acid chain; its full sequence is Inactive atromentin synthetase invA4 (950 aa).

An adenylation (A) domain region spans residues 37–460 (SRAVSQYPNH…SGRIKDTVVV (424 aa)). One can recognise a Carrier domain in the interval 592–670 (APSTETEKTL…TLAKYVDSLV (79 aa)). A thiolation and peptide carrier (T) domain region spans residues 597 to 667 (TEKTLAGIYA…EIITLAKYVD (71 aa)). Ser-629 is subject to O-(pantetheine 4'-phosphoryl)serine. The segment at 693-797 (PIFMVHPGIG…GIIDMIPHHM (105 aa)) is thioesterase (TE) domain.

It belongs to the ATP-dependent AMP-binding enzyme family.

In terms of biological role, inactive atromentin synthetase homolog. Does not accept 4-hydroxyphenylpyruvate (4-HPP) as substrate. The chain is Inactive atromentin synthetase invA4 (invA4) from Paxillus involutus (Naked brimcap).